A 429-amino-acid polypeptide reads, in one-letter code: 3-phosphoshikimate 1-carboxyvinyltransferase (429 aa).

Residues Lys-11, Ser-12, and Arg-16 each contribute to the 3-phosphoshikimate site. Lys-11 lines the phosphoenolpyruvate pocket. 2 residues coordinate phosphoenolpyruvate: Gly-82 and Arg-110. 4 residues coordinate 3-phosphoshikimate: Ser-155, Gln-157, Asp-302, and Lys-329. Gln-157 is a phosphoenolpyruvate binding site. The active-site Proton acceptor is the Asp-302. Arg-333 and Arg-385 together coordinate phosphoenolpyruvate.

The protein belongs to the EPSP synthase family. In terms of assembly, monomer.

It is found in the cytoplasm. The catalysed reaction is 3-phosphoshikimate + phosphoenolpyruvate = 5-O-(1-carboxyvinyl)-3-phosphoshikimate + phosphate. It functions in the pathway metabolic intermediate biosynthesis; chorismate biosynthesis; chorismate from D-erythrose 4-phosphate and phosphoenolpyruvate: step 6/7. Functionally, catalyzes the transfer of the enolpyruvyl moiety of phosphoenolpyruvate (PEP) to the 5-hydroxyl of shikimate-3-phosphate (S3P) to produce enolpyruvyl shikimate-3-phosphate and inorganic phosphate. This Helicobacter pylori (strain ATCC 700392 / 26695) (Campylobacter pylori) protein is 3-phosphoshikimate 1-carboxyvinyltransferase.